A 49-amino-acid chain; its full sequence is Small, acid-soluble spore protein O (49 aa).

The tract at residues Met1–Gln49 is disordered. The segment covering His8–Gly20 has biased composition (polar residues).

It belongs to the SspO family.

The protein resides in the spore core. This is Small, acid-soluble spore protein O from Bacillus cereus (strain G9842).